Reading from the N-terminus, the 482-residue chain is tRNA sulfurtransferase (482 aa).

One can recognise a THUMP domain in the interval 61–165; that stretch reads LTIRDALTRI…DDRLLLIKGR (105 aa). Residues 183 to 184, K265, G287, and Q296 contribute to the ATP site; that span reads LI. C344 and C456 form a disulfide bridge. The Rhodanese domain maps to 404 to 482; the sequence is FGPNDVILDI…GFKNVKVYRP (79 aa). Residue C456 is the Cysteine persulfide intermediate of the active site.

The protein belongs to the ThiI family. Interacts with IscS.

The protein resides in the cytoplasm. It catalyses the reaction [ThiI sulfur-carrier protein]-S-sulfanyl-L-cysteine + a uridine in tRNA + 2 reduced [2Fe-2S]-[ferredoxin] + ATP + H(+) = [ThiI sulfur-carrier protein]-L-cysteine + a 4-thiouridine in tRNA + 2 oxidized [2Fe-2S]-[ferredoxin] + AMP + diphosphate. The enzyme catalyses [ThiS sulfur-carrier protein]-C-terminal Gly-Gly-AMP + S-sulfanyl-L-cysteinyl-[cysteine desulfurase] + AH2 = [ThiS sulfur-carrier protein]-C-terminal-Gly-aminoethanethioate + L-cysteinyl-[cysteine desulfurase] + A + AMP + 2 H(+). Its pathway is cofactor biosynthesis; thiamine diphosphate biosynthesis. Its function is as follows. Catalyzes the ATP-dependent transfer of a sulfur to tRNA to produce 4-thiouridine in position 8 of tRNAs, which functions as a near-UV photosensor. Also catalyzes the transfer of sulfur to the sulfur carrier protein ThiS, forming ThiS-thiocarboxylate. This is a step in the synthesis of thiazole, in the thiamine biosynthesis pathway. The sulfur is donated as persulfide by IscS. In Escherichia coli O157:H7, this protein is tRNA sulfurtransferase.